The following is a 132-amino-acid chain: Small ribosomal subunit protein uS8 (132 aa).

It belongs to the universal ribosomal protein uS8 family. In terms of assembly, part of the 30S ribosomal subunit. Contacts proteins S5 and S12.

One of the primary rRNA binding proteins, it binds directly to 16S rRNA central domain where it helps coordinate assembly of the platform of the 30S subunit. This is Small ribosomal subunit protein uS8 from Lactobacillus helveticus (strain DPC 4571).